The primary structure comprises 128 residues: Holo-[acyl-carrier-protein] synthase (128 aa).

Positions 8 and 60 each coordinate Mg(2+).

The protein belongs to the P-Pant transferase superfamily. AcpS family. Requires Mg(2+) as cofactor.

The protein resides in the cytoplasm. It catalyses the reaction apo-[ACP] + CoA = holo-[ACP] + adenosine 3',5'-bisphosphate + H(+). In terms of biological role, transfers the 4'-phosphopantetheine moiety from coenzyme A to a Ser of acyl-carrier-protein. This is Holo-[acyl-carrier-protein] synthase from Anaeromyxobacter dehalogenans (strain 2CP-C).